A 298-amino-acid polypeptide reads, in one-letter code: Protease HtpX homolog (298 aa).

Transmembrane regions (helical) follow at residues 14–34 and 39–59; these read VVLL…AGYL and YAMG…SMIF. A Zn(2+)-binding site is contributed by His143. Glu144 is a catalytic residue. His147 is a binding site for Zn(2+). The next 2 helical transmembrane spans lie at 158 to 178 and 197 to 217; these read IAVA…RMLW and IITL…ASLI. Glu226 contacts Zn(2+).

It belongs to the peptidase M48B family. The cofactor is Zn(2+).

Its subcellular location is the cell membrane. The protein is Protease HtpX homolog of Streptococcus pyogenes serotype M6 (strain ATCC BAA-946 / MGAS10394).